The sequence spans 253 residues: 5'-nucleotidase SurE (253 aa).

4 residues coordinate a divalent metal cation: aspartate 8, aspartate 9, serine 39, and asparagine 95.

Belongs to the SurE nucleotidase family. Requires a divalent metal cation as cofactor.

The protein localises to the cytoplasm. The catalysed reaction is a ribonucleoside 5'-phosphate + H2O = a ribonucleoside + phosphate. In terms of biological role, nucleotidase that shows phosphatase activity on nucleoside 5'-monophosphates. The polypeptide is 5'-nucleotidase SurE (Kosmotoga olearia (strain ATCC BAA-1733 / DSM 21960 / TBF 19.5.1)).